The primary structure comprises 1370 residues: DNA-directed RNA polymerase subunit beta (1370 aa).

It belongs to the RNA polymerase beta chain family. In terms of assembly, the RNAP catalytic core consists of 2 alpha, 1 beta, 1 beta' and 1 omega subunit. When a sigma factor is associated with the core the holoenzyme is formed, which can initiate transcription.

It catalyses the reaction RNA(n) + a ribonucleoside 5'-triphosphate = RNA(n+1) + diphosphate. Its function is as follows. DNA-dependent RNA polymerase catalyzes the transcription of DNA into RNA using the four ribonucleoside triphosphates as substrates. This chain is DNA-directed RNA polymerase subunit beta, found in Geotalea daltonii (strain DSM 22248 / JCM 15807 / FRC-32) (Geobacter daltonii).